A 52-amino-acid polypeptide reads, in one-letter code: UPF0057 membrane protein YqaE (52 aa).

A run of 2 helical transmembrane segments spans residues 1–21 (MGFW…LLGK) and 23–43 (FGWA…PGLI).

This sequence belongs to the UPF0057 (PMP3) family.

It is found in the cell membrane. The sequence is that of UPF0057 membrane protein YqaE (yqaE) from Escherichia coli O157:H7.